The following is a 1565-amino-acid chain: Major cell-surface adhesin PAc (1565 aa).

Residues 1–38 form the signal peptide; that stretch reads MKVKKTYGFRKSKISKTLCGAVLGTVAAVSVAGQKVFA. Over residues 42-54 the composition is skewed to low complexity; the sequence is TTTSDVDTKVVGT. Positions 42–81 are disordered; that stretch reads TTTSDVDTKVVGTQTGNPATNLPEAQGSASKEAEQSQTKL. Residues 72 to 81 are compositionally biased toward basic and acidic residues; sequence KEAEQSQTKL. 4 Ag I/II A repeats span residues 146–220, 221–302, 303–384, and 385–466; these read KKTT…QKTN, AANQ…QEAN, AANE…KKAN, and AANE…QKDL. The heptad repeats of Y-[EQ]-X-X-L-A-X stretch occupies residues 203 to 448; sequence EAKLAQYQAD…KRNADAKADY (246 aa). The segment at 461 to 834 is V-region (lectin-like); sequence KYQKDLADYP…VNVPKVTKEK (374 aa). Disordered stretches follow at residues 827–985 and 1486–1511; these read VPKV…PTPP and NTVKTTTPEDPADPTDPQDPSSPRTS. The P1 repeat unit spans residues 848–887; that stretch reads TYETEKPLKPAPVAPNYEKEPTPPTRTPDQAEPNKPTPPT. Residues 888–926 form a P2 repeat; it reads YETEKPLEPAPVEPSYEAEPTPPTRTPDQAEPNKPTPPT. Residues 927–964 form a P3 repeat; sequence YETEKPLEPAPVEPSYEAEPTPPTPTPDQPEPNKPVEP. Over residues 946–961 the composition is skewed to pro residues; that stretch reads PTPPTPTPDQPEPNKP. The LPXTG sorting signal motif lies at 1532-1536; sequence LPNTG. At Thr-1535 the chain carries Pentaglycyl murein peptidoglycan amidated threonine. Positions 1536–1565 are cleaved as a propeptide — removed by sortase; sequence GVTNNAYMPLLGIIGLVTSFSLLGLKAKKD.

It belongs to the antigen I/II family.

It is found in the secreted. The protein localises to the cell wall. In terms of biological role, surface protein antigen implicated in dental caries. This Streptococcus mutans protein is Major cell-surface adhesin PAc.